The chain runs to 128 residues: Gas vesicle protein O (128 aa).

Positions 1–49 (MANTPEDTQNTQNDSQNDSQNDSQKDTSARATSARAHQQPQEQPPSPMR) are disordered. Low complexity predominate over residues 7–22 (DTQNTQNDSQNDSQND). The span at 29 to 41 (ARATSARAHQQPQ) shows a compositional bias: polar residues.

It belongs to the gas vesicle GvpO family.

It localises to the gas vesicle. In terms of biological role, a minor component of the gas vesicle. May play a role in transcription and/or RNA stability and in GV assembly. Gas vesicles are hollow, gas filled proteinaceous nanostructures found in some microorganisms. It is not clear what function gas vesicles perform in soil bacteria. This Streptomyces sp. (strain CB03234) protein is Gas vesicle protein O.